A 286-amino-acid chain; its full sequence is Shikimate dehydrogenase (NADP(+)) (286 aa).

Residues 19 to 21 (SFS) and Thr-66 contribute to the shikimate site. Catalysis depends on Lys-70, which acts as the Proton acceptor. Asn-91 and Asp-107 together coordinate shikimate. NADP(+)-binding positions include 129–133 (GSGGA) and Leu-229. Position 231 (Tyr-231) interacts with shikimate. Residue Gly-252 participates in NADP(+) binding.

Belongs to the shikimate dehydrogenase family. Homodimer.

The enzyme catalyses shikimate + NADP(+) = 3-dehydroshikimate + NADPH + H(+). Its pathway is metabolic intermediate biosynthesis; chorismate biosynthesis; chorismate from D-erythrose 4-phosphate and phosphoenolpyruvate: step 4/7. Involved in the biosynthesis of the chorismate, which leads to the biosynthesis of aromatic amino acids. Catalyzes the reversible NADPH linked reduction of 3-dehydroshikimate (DHSA) to yield shikimate (SA). The polypeptide is Shikimate dehydrogenase (NADP(+)) (Prochlorococcus marinus (strain MIT 9301)).